The primary structure comprises 91 residues: UPF0512 protein E (91 aa).

A compositionally biased stretch (low complexity) spans M1–N25. The interval M1 to R26 is disordered.

The protein belongs to the UPF0512 family.

The polypeptide is UPF0512 protein E (Dictyostelium discoideum (Social amoeba)).